The primary structure comprises 598 residues: Aspartate--tRNA ligase (598 aa).

An L-aspartate-binding site is contributed by glutamate 182. Positions 206–209 (QLFK) are aspartate. Arginine 228 lines the L-aspartate pocket. Residues 228-230 (RDE) and glutamine 237 each bind ATP. Histidine 456 provides a ligand contact to L-aspartate. Glutamate 490 contributes to the ATP binding site. L-aspartate is bound at residue arginine 497. 542-545 (GVDR) is an ATP binding site.

It belongs to the class-II aminoacyl-tRNA synthetase family. Type 1 subfamily. In terms of assembly, homodimer.

It localises to the cytoplasm. The enzyme catalyses tRNA(Asp) + L-aspartate + ATP = L-aspartyl-tRNA(Asp) + AMP + diphosphate. Functionally, catalyzes the attachment of L-aspartate to tRNA(Asp) in a two-step reaction: L-aspartate is first activated by ATP to form Asp-AMP and then transferred to the acceptor end of tRNA(Asp). The protein is Aspartate--tRNA ligase of Agathobacter rectalis (strain ATCC 33656 / DSM 3377 / JCM 17463 / KCTC 5835 / VPI 0990) (Eubacterium rectale).